The following is a 140-amino-acid chain: VapC ribonuclease Y4jK (140 aa).

The region spanning 2-135 is the PINc domain; it reads IVLDTNVISE…FEAAGLDIIN (134 aa). Residues Asp5 and Asp104 each contribute to the Mg(2+) site.

It belongs to the PINc/VapC protein family. The cofactor is Mg(2+).

Functionally, toxic component of a type II toxin-antitoxin (TA) system. An RNase. Involved in plasmid stability. The polypeptide is VapC ribonuclease Y4jK (Sinorhizobium fredii (strain NBRC 101917 / NGR234)).